A 212-amino-acid chain; its full sequence is Phosphatidylserine decarboxylase proenzyme (212 aa).

Ser-182 functions as the Schiff-base intermediate with substrate; via pyruvic acid in the catalytic mechanism. Ser-182 bears the Pyruvic acid (Ser); by autocatalysis mark.

The protein belongs to the phosphatidylserine decarboxylase family. PSD-A subfamily. Heterodimer of a large membrane-associated beta subunit and a small pyruvoyl-containing alpha subunit. Pyruvate is required as a cofactor. Is synthesized initially as an inactive proenzyme. Formation of the active enzyme involves a self-maturation process in which the active site pyruvoyl group is generated from an internal serine residue via an autocatalytic post-translational modification. Two non-identical subunits are generated from the proenzyme in this reaction, and the pyruvate is formed at the N-terminus of the alpha chain, which is derived from the carboxyl end of the proenzyme. The post-translation cleavage follows an unusual pathway, termed non-hydrolytic serinolysis, in which the side chain hydroxyl group of the serine supplies its oxygen atom to form the C-terminus of the beta chain, while the remainder of the serine residue undergoes an oxidative deamination to produce ammonia and the pyruvoyl prosthetic group on the alpha chain.

It localises to the cell membrane. It carries out the reaction a 1,2-diacyl-sn-glycero-3-phospho-L-serine + H(+) = a 1,2-diacyl-sn-glycero-3-phosphoethanolamine + CO2. The protein operates within phospholipid metabolism; phosphatidylethanolamine biosynthesis; phosphatidylethanolamine from CDP-diacylglycerol: step 2/2. Its function is as follows. Catalyzes the formation of phosphatidylethanolamine (PtdEtn) from phosphatidylserine (PtdSer). In Chlorobium luteolum (strain DSM 273 / BCRC 81028 / 2530) (Pelodictyon luteolum), this protein is Phosphatidylserine decarboxylase proenzyme.